Reading from the N-terminus, the 413-residue chain is Alpha-1-antitrypsin 1-5 (413 aa).

An N-terminal signal peptide occupies residues 1 to 24 (MTPSISWCLLLLAGLCCLVPSFLA). N-linked (GlcNAc...) asparagine glycosylation is found at Asn64, Asn101, and Asn265. Residues 368-387 (AATVLQGGFLSMPPILHFNR) form an RCL region.

This sequence belongs to the serpin family.

It localises to the secreted. In terms of biological role, does not inhibit elastase or chymotrypsin. No target protease has been identified to date. This chain is Alpha-1-antitrypsin 1-5 (Serpina1e), found in Mus musculus (Mouse).